We begin with the raw amino-acid sequence, 370 residues long: MSGKRVVVGMSGGVDSSVTAWLLKQQGYEVIGLFMKNWEDDDDSEYCSTRQDWIDVVSVADLIGVDVEAVNFAAEYKDRVFADFLREYSAGRTPNPDVLCNAEIKFKAFLDHAMALGADTIATGHYARVREAGGRFELLKAFDHTKDQSYFLHRLNQAQLSRTLFPLGEMPKTRVREIAAEIGLPNARKKDSTGICFIGERPFRDFLNRYLPTKPGPIRTPDGKTIGQHIGLAFYTLGQRKGIGIGGSRDGNGDAWYVARKDMAANTLYVAQGHDHPWLLAHTVHADDLSWVAGHPPAEGTQLAAKTRYRQADAPCAVTRATGDALTLTFQQAQWAVTPGQSAVLYDGDICLGGGIIASTEAASLEQAVA.

ATP-binding positions include 9–16 and Met35; that span reads GMSGGVDS. Residues 95 to 97 form an interaction with target base in tRNA region; sequence NPD. Cys100 (nucleophile) is an active-site residue. Cysteines 100 and 196 form a disulfide. Gly124 contributes to the ATP binding site. The tract at residues 146-148 is interaction with tRNA; that stretch reads KDQ. The active-site Cysteine persulfide intermediate is the Cys196. The segment at 308–309 is interaction with tRNA; the sequence is RY.

This sequence belongs to the MnmA/TRMU family.

It is found in the cytoplasm. It carries out the reaction S-sulfanyl-L-cysteinyl-[protein] + uridine(34) in tRNA + AH2 + ATP = 2-thiouridine(34) in tRNA + L-cysteinyl-[protein] + A + AMP + diphosphate + H(+). Its function is as follows. Catalyzes the 2-thiolation of uridine at the wobble position (U34) of tRNA, leading to the formation of s(2)U34. This Ralstonia nicotianae (strain ATCC BAA-1114 / GMI1000) (Ralstonia solanacearum) protein is tRNA-specific 2-thiouridylase MnmA.